The primary structure comprises 190 residues: uncharacterized protein (190 aa).

The next 4 helical transmembrane spans lie at 15 to 35 (LVMS…VLAI), 58 to 78 (FSSF…GVLI), 94 to 114 (FFSA…YFAF), and 148 to 168 (FLFF…SFFV).

The protein resides in the membrane. This is an uncharacterized protein from Saccharomyces cerevisiae (strain ATCC 204508 / S288c) (Baker's yeast).